A 57-amino-acid polypeptide reads, in one-letter code: MSLYQHMLVFYAVMAAIAFLITWFLSHDKKRIRFLSAFLVGATWPMSFPVALLFSLF.

The next 2 helical transmembrane spans lie at 6-26 and 34-54; these read HMLV…WFLS and FLSA…ALLF.

It belongs to the GhoT/OrtT toxin family.

It is found in the cell inner membrane. Its function is as follows. Acts as an orphan toxin which is important for maintaining cell fitness during stress related to the stringent response. Increases the formation of persister cells. Has no known antitoxin. This chain is Orphan toxin OrtT, found in Escherichia coli O6:H1 (strain CFT073 / ATCC 700928 / UPEC).